We begin with the raw amino-acid sequence, 138 residues long: Acidic phospholipase A2 inhibitor chain HPD-1I (138 aa).

Positions 1–16 (MRTLWIVAVCLIGVEG) are cleaved as a signal peptide. Intrachain disulfides connect cysteine 42/cysteine 131, cysteine 44/cysteine 60, cysteine 59/cysteine 111, cysteine 65/cysteine 138, cysteine 66/cysteine 104, cysteine 73/cysteine 97, and cysteine 91/cysteine 102.

As to quaternary structure, heterodimer of an acidic and a basic chain; non-covalently linked. The basic chain is toxic and has phospholipase A2 activity (chain HDP-1P (AC Q1RP79) or HDP-2P (AC Q1RP78)) and the acidic chain is non-toxic and functions as its inhibitor (chain HPD-1I). In terms of tissue distribution, expressed by the venom gland.

It is found in the secreted. Heterodimer: slightly affects neuromuscular transmission acting presynaptically. It has a low catalytic activity, a low anticoagulant activity and weakly inhibits ADP-induced platelet aggregation. In terms of biological role, monomer: has no activity (neurotoxic, catalytic, anticoagulant and a ADP-induced platelet aggregation), but inhibits phospholipase A2. This Vipera nikolskii (Nikolsky's adder) protein is Acidic phospholipase A2 inhibitor chain HPD-1I.